We begin with the raw amino-acid sequence, 136 residues long: Peptide methionine sulfoxide reductase B5 (136 aa).

One can recognise a MsrB domain in the interval aspartate 14 to alanine 135. Zn(2+) is bound by residues cysteine 53, cysteine 56, cysteine 99, and cysteine 102. Residues cysteine 71 and cysteine 124 are joined by a disulfide bond. Residue cysteine 124 is the Nucleophile of the active site.

This sequence belongs to the MsrB Met sulfoxide reductase family. Requires Zn(2+) as cofactor.

It is found in the cytoplasm. It localises to the cytosol. It catalyses the reaction L-methionyl-[protein] + [thioredoxin]-disulfide + H2O = L-methionyl-(R)-S-oxide-[protein] + [thioredoxin]-dithiol. Catalyzes the reduction of methionine sulfoxide (MetSO) to methionine in proteins. Plays a protective role against oxidative stress by restoring activity to proteins that have been inactivated by methionine oxidation. MSRB family specifically reduces the MetSO R-enantiomer. This chain is Peptide methionine sulfoxide reductase B5 (MSRB5), found in Oryza sativa subsp. japonica (Rice).